Reading from the N-terminus, the 78-residue chain is Small ribosomal subunit protein bS18 (78 aa).

The protein belongs to the bacterial ribosomal protein bS18 family. As to quaternary structure, part of the 30S ribosomal subunit. Forms a tight heterodimer with protein bS6.

Its function is as follows. Binds as a heterodimer with protein bS6 to the central domain of the 16S rRNA, where it helps stabilize the platform of the 30S subunit. This chain is Small ribosomal subunit protein bS18, found in Alkaliphilus oremlandii (strain OhILAs) (Clostridium oremlandii (strain OhILAs)).